The chain runs to 327 residues: Methionine import ATP-binding protein MetN (327 aa).

The 237-residue stretch at 3–239 (VELKNIEKIY…PKHAVTKELI (237 aa)) folds into the ABC transporter domain. 36-43 (GYSGAGKS) is an ATP binding site.

This sequence belongs to the ABC transporter superfamily. Methionine importer (TC 3.A.1.24) family. The complex is composed of two ATP-binding proteins (MetN), two transmembrane proteins (MetI) and a solute-binding protein (MetQ).

Its subcellular location is the cell inner membrane. The catalysed reaction is L-methionine(out) + ATP + H2O = L-methionine(in) + ADP + phosphate + H(+). The enzyme catalyses D-methionine(out) + ATP + H2O = D-methionine(in) + ADP + phosphate + H(+). Part of the ABC transporter complex MetNIQ involved in methionine import. Responsible for energy coupling to the transport system. This is Methionine import ATP-binding protein MetN from Helicobacter acinonychis (strain Sheeba).